The primary structure comprises 207 residues: Ras-related protein RABH1e (207 aa).

16-23 (GDQSVGKT) is a binding site for GTP. The Effector region motif lies at 38–46 (YQATIGIDF). Residues 64-68 (DTAGQ), 122-125 (NKTD), and 152-153 (SA) contribute to the GTP site. Residues cysteine 205 and cysteine 207 are each lipidated (S-geranylgeranyl cysteine). Residue cysteine 207 is modified to Cysteine methyl ester.

Belongs to the small GTPase superfamily. Rab family.

The protein resides in the golgi apparatus membrane. Functionally, protein transport. Regulator of membrane traffic from the Golgi apparatus towards the endoplasmic reticulum (ER). The chain is Ras-related protein RABH1e (RABH1E) from Arabidopsis thaliana (Mouse-ear cress).